We begin with the raw amino-acid sequence, 287 residues long: Probable endoribonuclease YicC (287 aa).

Belongs to the YicC/YloC family. A divalent metal cation serves as cofactor.

Its function is as follows. Probably a ssRNA endonuclease. Might contribute to small RNA (sRNA) regulation. This chain is Probable endoribonuclease YicC, found in Haemophilus influenzae (strain ATCC 51907 / DSM 11121 / KW20 / Rd).